Reading from the N-terminus, the 167-residue chain is DNA-directed RNA polymerase II subunit rpb-9 (167 aa).

The segment at 28 to 49 (DDMYDQNGASPAPSQNEKPGKS) is disordered. Over residues 34–44 (NGASPAPSQNE) the composition is skewed to polar residues. Cys-59, Cys-62, Cys-81, Cys-84, Cys-128, Cys-131, Cys-156, and Cys-161 together coordinate Zn(2+). The C4-type zinc finger occupies 59–84 (CPECNNMLYPREDKESRVLMYSCRNC). The segment at 124 to 166 (EEHQCPVCGKSKAVFFQAQTKKAEEEMRLYYVCASQDCQHRWT) adopts a TFIIS-type zinc-finger fold.

This sequence belongs to the archaeal RpoM/eukaryotic RPA12/RPB9/RPC11 RNA polymerase family. Component of the RNA polymerase II (Pol II) complex consisting of 12 subunits. As to expression, expressed in the soma and in the germline.

The protein resides in the nucleus. Its subcellular location is the nucleolus. In terms of biological role, DNA-dependent RNA polymerase catalyzes the transcription of DNA into RNA using the four ribonucleoside triphosphates as substrates. Component of RNA polymerase II which synthesizes mRNA precursors and many functional non-coding RNAs. Pol II is the central component of the basal RNA polymerase II transcription machinery. It is composed of mobile elements that move relative to each other. RPB9 is part of the upper jaw surrounding the central large cleft and thought to grab the incoming DNA template. Recruits ints-6, a component of the Integrator complex to PIWI-interacting RNA (piRNA) genes, to mediate Integrator complex-dependent cleavage of 3' ends of nascent transcripts upon RNA Pol II backtracking to terminate transcription and generate piRNA precursors. Promotes the biogenesis of secondary 22G-siRNAs (a class of 22 nucleotide siRNAs that possess a triphosphorylated guanine residue at the 5'-end). Involved in gene silencing mediated by a class of 21 nucleotide piRNAs that possess a uracil residue at the 5'-end (also called 21U-RNAs) and guide the Piwi protein prg-1 to its DNA targets for silencing. Plays a role in small RNA-directed transgenerational epigenetic inheritance (also called RNAe) over several generations. Not required for the transgenerational inheritance of exogenous small interfering RNAs (RNAi). May play a role in the silencing of the DNA transposable elements from the DNA transposon families, Chapaev-2 and CEMUDR1. The sequence is that of DNA-directed RNA polymerase II subunit rpb-9 from Caenorhabditis elegans.